An 801-amino-acid chain; its full sequence is PR domain zinc finger protein 4 (801 aa).

Residues 412–529 enclose the SET domain; sequence KQLVLRQSIV…PENELLFYYS (118 aa). A C2H2-type 1; atypical zinc finger spans residues 545 to 566; it reads HLCNCGKECNSYTEFKAHLTSH. C2H2-type zinc fingers lie at residues 618–640, 646–668, 674–696, and 702–724; these read HKCDFCSKAFSDPSNLRTHLKIH, YRCTLCDKSFTQKAHLESHMVIH, LKCDYCDKLFMRRQDLKQHVLIH, and IKCPKCDKLFLRTNHLKKHLNSH. The C2H2-type 6; atypical zinc finger occupies 730 to 752; it reads YVCEKCTKAYLTKYHLTRHLKTC. The disordered stretch occupies residues 751-782; the sequence is TCKGPTSSSSAPEEEEEDDSEEEDLADSVGTE. Acidic residues predominate over residues 762-776; sequence PEEEEEDDSEEEDLA.

This sequence belongs to the class V-like SAM-binding methyltransferase superfamily.

The protein resides in the nucleus. In terms of biological role, may function as a transcription factor involved in cell differentiation. The polypeptide is PR domain zinc finger protein 4 (PRDM4) (Pongo abelii (Sumatran orangutan)).